A 457-amino-acid polypeptide reads, in one-letter code: Argininosuccinate lyase (457 aa).

It belongs to the lyase 1 family. Argininosuccinate lyase subfamily.

It is found in the cytoplasm. The enzyme catalyses 2-(N(omega)-L-arginino)succinate = fumarate + L-arginine. It participates in amino-acid biosynthesis; L-arginine biosynthesis; L-arginine from L-ornithine and carbamoyl phosphate: step 3/3. This Exiguobacterium sibiricum (strain DSM 17290 / CCUG 55495 / CIP 109462 / JCM 13490 / 255-15) protein is Argininosuccinate lyase.